The following is a 225-amino-acid chain: Cytidylate kinase (225 aa).

11–19 is an ATP binding site; sequence GPAAAGKST.

It belongs to the cytidylate kinase family. Type 1 subfamily.

Its subcellular location is the cytoplasm. It catalyses the reaction CMP + ATP = CDP + ADP. The catalysed reaction is dCMP + ATP = dCDP + ADP. This Bacillus pumilus (strain SAFR-032) protein is Cytidylate kinase.